The sequence spans 362 residues: UDP-N-acetylglucosamine--N-acetylmuramyl-(pentapeptide) pyrophosphoryl-undecaprenol N-acetylglucosamine transferase (362 aa).

UDP-N-acetyl-alpha-D-glucosamine contacts are provided by residues 15–17, Asn-127, Arg-165, Ser-191, Ile-247, 266–271, and Gln-292; these read TGG and ALTVSE.

The protein belongs to the glycosyltransferase 28 family. MurG subfamily.

The protein localises to the cell inner membrane. It catalyses the reaction di-trans,octa-cis-undecaprenyl diphospho-N-acetyl-alpha-D-muramoyl-L-alanyl-D-glutamyl-meso-2,6-diaminopimeloyl-D-alanyl-D-alanine + UDP-N-acetyl-alpha-D-glucosamine = di-trans,octa-cis-undecaprenyl diphospho-[N-acetyl-alpha-D-glucosaminyl-(1-&gt;4)]-N-acetyl-alpha-D-muramoyl-L-alanyl-D-glutamyl-meso-2,6-diaminopimeloyl-D-alanyl-D-alanine + UDP + H(+). The protein operates within cell wall biogenesis; peptidoglycan biosynthesis. Cell wall formation. Catalyzes the transfer of a GlcNAc subunit on undecaprenyl-pyrophosphoryl-MurNAc-pentapeptide (lipid intermediate I) to form undecaprenyl-pyrophosphoryl-MurNAc-(pentapeptide)GlcNAc (lipid intermediate II). The chain is UDP-N-acetylglucosamine--N-acetylmuramyl-(pentapeptide) pyrophosphoryl-undecaprenol N-acetylglucosamine transferase from Shewanella baltica (strain OS155 / ATCC BAA-1091).